A 270-amino-acid polypeptide reads, in one-letter code: S-methyl-5'-thioadenosine phosphorylase (270 aa).

Residues Ser-16, 58–59 (RH), and 91–92 (SA) contribute to the phosphate site. Disulfide bonds link Cys-138–Cys-205, Cys-200–Cys-262, and Cys-259–Cys-261. Met-190 contributes to the substrate binding site. Residue Thr-191 coordinates phosphate. 214-216 (DYD) serves as a coordination point for substrate.

The protein belongs to the PNP/MTAP phosphorylase family. MTAP subfamily. Homohexamer. Dimer of a homotrimer.

The catalysed reaction is S-methyl-5'-thioadenosine + phosphate = 5-(methylsulfanyl)-alpha-D-ribose 1-phosphate + adenine. It functions in the pathway amino-acid biosynthesis; L-methionine biosynthesis via salvage pathway; S-methyl-5-thio-alpha-D-ribose 1-phosphate from S-methyl-5'-thioadenosine (phosphorylase route): step 1/1. Catalyzes the reversible phosphorylation of S-methyl-5'-thioadenosine (MTA) to adenine and 5-methylthioribose-1-phosphate. Involved in the breakdown of MTA, a major by-product of polyamine biosynthesis. Responsible for the first step in the methionine salvage pathway after MTA has been generated from S-adenosylmethionine. Has broad substrate specificity with 6-aminopurine nucleosides as preferred substrates. The sequence is that of S-methyl-5'-thioadenosine phosphorylase from Saccharolobus solfataricus (strain ATCC 35092 / DSM 1617 / JCM 11322 / P2) (Sulfolobus solfataricus).